Consider the following 563-residue polypeptide: Putative GMC-type oxidoreductase L128 (563 aa).

Positions M1–S21 are cleaved as a signal peptide. D48 to R77 is a binding site for FAD. H504 (proton acceptor) is an active-site residue.

Belongs to the GMC oxidoreductase family. FAD serves as cofactor.

The polypeptide is Putative GMC-type oxidoreductase L128 (Acanthamoeba polyphaga mimivirus (APMV)).